A 288-amino-acid chain; its full sequence is Glandicoline B O-methyltransferase roqN (288 aa).

Residues threonine 57, aspartate 82, and 109-110 (DA) each bind S-adenosyl-L-methionine.

Belongs to the class I-like SAM-binding methyltransferase superfamily.

The enzyme catalyses glandicoline B + S-adenosyl-L-methionine = meleagrin + S-adenosyl-L-homocysteine + H(+). It functions in the pathway alkaloid biosynthesis. Its function is as follows. Glandicoline B O-methyltransferase; part of the gene cluster that mediates the biosynthesis of the mycotoxin meleagrin. The first stage is catalyzed by the dipeptide synthase roqA which condenses histidine and tryptophan to produce histidyltryptophanyldiketopiperazine (HTD). HTD is then converted to roquefortine C through two possible pathways. In the first pathway, prenyltransferase roqD transforms HTD to the intermediate roquefortine D, which is in turn converted to roquefortine C by the cytochrome P450 monooxygenase roqR. In the second pathway, HTD is first converted to the intermediate dehydrohistidyltryptophanyldi-ketopiperazine (DHTD) by roqR which is then prenylated by roqD to form roquefortine C. Roquefortine C can be further transformed to meleagrin via three more reactions including oxydation to glandicolin A by roqM, which is further reduced to glandicoline B by roqO. Finally, glandicoline B is converted to meleagrin by the glandicoline B O-methyltransferase roqN. More studies identified further branching and additional metabolites produced by the roquefortine/meleagrin cluster, including roquefortine F, roquefortine L, roquefortine M, roquefortine N and neoxaline. The protein is Glandicoline B O-methyltransferase roqN of Penicillium rubens (strain ATCC 28089 / DSM 1075 / NRRL 1951 / Wisconsin 54-1255) (Penicillium chrysogenum).